Consider the following 253-residue polypeptide: NAD-dependent protein deacylase 2 (253 aa).

The Deacetylase sirtuin-type domain maps to Met1–Glu252. NAD(+)-binding positions include Gly23–Trp42 and Gln100–Asp103. His118 functions as the Proton acceptor in the catalytic mechanism. The Zn(2+) site is built by Cys126, Cys129, Cys150, and Cys153. NAD(+) contacts are provided by residues Gly191 to Ser193, Asn217 to Glu219, and Ala235.

Belongs to the sirtuin family. Class III subfamily. The cofactor is Zn(2+).

It localises to the cytoplasm. It carries out the reaction N(6)-acetyl-L-lysyl-[protein] + NAD(+) + H2O = 2''-O-acetyl-ADP-D-ribose + nicotinamide + L-lysyl-[protein]. In terms of biological role, NAD-dependent protein deacetylase which modulates the activities of several proteins which are inactive in their acetylated form. Deacetylates the N-terminal lysine residue of Alba, the major archaeal chromatin protein and that, in turn, increases Alba's DNA binding affinity, thereby repressing transcription. The polypeptide is NAD-dependent protein deacylase 2 (Archaeoglobus fulgidus (strain ATCC 49558 / DSM 4304 / JCM 9628 / NBRC 100126 / VC-16)).